A 576-amino-acid chain; its full sequence is Arginine--tRNA ligase (576 aa).

Positions 122 to 132 (PNVAKEMHVGH) match the 'HIGH' region motif.

Belongs to the class-I aminoacyl-tRNA synthetase family. As to quaternary structure, monomer.

Its subcellular location is the cytoplasm. The enzyme catalyses tRNA(Arg) + L-arginine + ATP = L-arginyl-tRNA(Arg) + AMP + diphosphate. This Pectobacterium carotovorum subsp. carotovorum (strain PC1) protein is Arginine--tRNA ligase.